Here is a 416-residue protein sequence, read N- to C-terminus: Phosphoglycerate kinase (416 aa).

Substrate is bound by residues 24-26 (DLN), Arg-40, 63-66 (HLGR), Arg-126, and Arg-166. ATP contacts are provided by residues Lys-216, Gly-304, Glu-335, and 364 to 367 (GGDS).

Belongs to the phosphoglycerate kinase family. Monomer.

It is found in the cytoplasm. The enzyme catalyses (2R)-3-phosphoglycerate + ATP = (2R)-3-phospho-glyceroyl phosphate + ADP. It participates in carbohydrate degradation; glycolysis; pyruvate from D-glyceraldehyde 3-phosphate: step 2/5. This Mycobacterium leprae (strain Br4923) protein is Phosphoglycerate kinase.